A 239-amino-acid polypeptide reads, in one-letter code: LexA repressor (239 aa).

Positions 27–47 (FDEMKDALDLASKSGIHRLIT) form a DNA-binding region, H-T-H motif. Catalysis depends on for autocatalytic cleavage activity residues S159 and K197.

Belongs to the peptidase S24 family. As to quaternary structure, homodimer.

The enzyme catalyses Hydrolysis of Ala-|-Gly bond in repressor LexA.. Represses a number of genes involved in the response to DNA damage (SOS response), including recA and lexA. In the presence of single-stranded DNA, RecA interacts with LexA causing an autocatalytic cleavage which disrupts the DNA-binding part of LexA, leading to derepression of the SOS regulon and eventually DNA repair. The polypeptide is LexA repressor (Rhizobium radiobacter (Agrobacterium tumefaciens)).